Here is a 265-residue protein sequence, read N- to C-terminus: Transcription factor Spi-B-like (265 aa).

Residues 1-31 (MLTLEASQLDGPHPSYMFSDSSFYDLDSCKP) are TAD1 (Acidic). Residues 42–63 (AEPPTDPCAGWLELAEPGYEPF) are TAD2. The disordered stretch occupies residues 127–160 (TPLSEDDDFPTDAPALEVSDSDSDENLSPGGSLD). Positions 169-252 (LRLYQFLLGL…VKKKLTYQFG (84 aa)) form a DNA-binding region, ETS.

It belongs to the ETS family.

The protein resides in the nucleus. Its function is as follows. May act as a sequence specific transcriptional activator. The protein is Transcription factor Spi-B-like of Paleosuchus palpebrosus (Cuvier's smooth-fronted caiman).